The sequence spans 109 residues: Iron-sulfur cluster assembly protein CyaY (109 aa).

The protein belongs to the frataxin family.

In terms of biological role, involved in iron-sulfur (Fe-S) cluster assembly. May act as a regulator of Fe-S biogenesis. In Albidiferax ferrireducens (strain ATCC BAA-621 / DSM 15236 / T118) (Rhodoferax ferrireducens), this protein is Iron-sulfur cluster assembly protein CyaY.